The following is a 258-amino-acid chain: Indole-3-glycerol phosphate synthase 2 (258 aa).

This sequence belongs to the TrpC family.

The catalysed reaction is 1-(2-carboxyphenylamino)-1-deoxy-D-ribulose 5-phosphate + H(+) = (1S,2R)-1-C-(indol-3-yl)glycerol 3-phosphate + CO2 + H2O. Its pathway is amino-acid biosynthesis; L-tryptophan biosynthesis; L-tryptophan from chorismate: step 4/5. The function of the second trp operon in S.coelicolor is to produce tryptophan for the biosynthesis of calcium-dependent antibiotic (CDA). The sequence is that of Indole-3-glycerol phosphate synthase 2 (trpC2) from Streptomyces coelicolor (strain ATCC BAA-471 / A3(2) / M145).